Reading from the N-terminus, the 429-residue chain is 4-hydroxy-3-methylbut-2-en-1-yl diphosphate synthase (flavodoxin) (429 aa).

4 residues coordinate [4Fe-4S] cluster: Cys-317, Cys-320, Cys-363, and Glu-370.

It belongs to the IspG family. It depends on [4Fe-4S] cluster as a cofactor.

It catalyses the reaction (2E)-4-hydroxy-3-methylbut-2-enyl diphosphate + oxidized [flavodoxin] + H2O + 2 H(+) = 2-C-methyl-D-erythritol 2,4-cyclic diphosphate + reduced [flavodoxin]. It participates in isoprenoid biosynthesis; isopentenyl diphosphate biosynthesis via DXP pathway; isopentenyl diphosphate from 1-deoxy-D-xylulose 5-phosphate: step 5/6. Its function is as follows. Converts 2C-methyl-D-erythritol 2,4-cyclodiphosphate (ME-2,4cPP) into 1-hydroxy-2-methyl-2-(E)-butenyl 4-diphosphate. This chain is 4-hydroxy-3-methylbut-2-en-1-yl diphosphate synthase (flavodoxin), found in Deinococcus radiodurans (strain ATCC 13939 / DSM 20539 / JCM 16871 / CCUG 27074 / LMG 4051 / NBRC 15346 / NCIMB 9279 / VKM B-1422 / R1).